The chain runs to 1603 residues: MRTTKVYKLVIHKKGFGGSDDELVVNPKVFPHIKLGDIVEIAHPNDEYSPLLLQVKSLKEDLQKETISVDQTVTQVFRLRPYQDVYVNVVDPKDVTLDLVELTFKDQYIGRGDMWRLKKSLVSTCAYITQKVEFAGIRAQAGELWVKNEKVMCGYISEDTRVVFRSTSAMVYIFIQMSCEMWDFDIYGDLYFEKAVNGFLADLFTKWKEKNCSHEVTVVLFSRTFYDAKSVDEFPEINRASIRQDHKGRFYEDFYKVVVQNERREEWTSLLVTIKKLFIQYPVLVRLEQAEGFPQGDNSTSAQGNYLEAINLSFNVFDKHYINRNFDRTGQMSVVITPGVGVFEVDRLLMILTKQRMIDNGIGVDLVCMGEQPLHAVPLFKLHNRSAPRDSRLGDDYNIPHWINHSFYTSKSQLFCNSFTPRIKLAGKKPASEKAKNGRDTSLGSPKESENALPIQVDYDAYDAQVFRLPGPSRAQCLTTCRSVRERESHSRKSASSCDVSSSPSLPSRTLPTEEVRSQASDDSSLGKSANILMIPHPHLHQYEVSSSLGYTSTRDVLENMMEPPQRDSSAPGRFHVGSAESMLHVRPGGYTPQRALINPFAPSRMPMKLTSNRRRWMHTFPVGPSGEAIQIHHQTRQNMAELQGSGQRDPTHSSAELLELAYHEAAGRHSNSRQPGDGMSFLNFSGTEELSVGLLSNSGAGMNPRTQNKDSLEDSVSTSPDPILTLSAPPVVPGFCCTVGVDWKSLTTPACLPLTTDYFPDRQGLQNDYTEGCYDLLPEADIDRRDEDGVQMTAQQVFEEFICQRLMQGYQIIVQPKTQKPNPAVPPPLSSSPLYSRGLVSRNRPEEEDQYWLSMGRTFHKVTLKDKMITVTRYLPKYPYESAQIHYTYSLCPSHSDSEFVSCWVEFSHERLEEYKWNYLDQYICSAGSEDFSLIESLKFWRTRFLLLPACVTATKRITEGEAHCDIYGDRPRADEDEWQLLDGFVRFVEGLNRIRRRHRSDRMMRKGTAMKGLQMTGPISTHSLESTAPPVGKKGTSALSALLEMEASQKCLGEQQAAVHGGKSSAQSAESSSVAMTPTYMDSPRKDGAFFMEFVRSPRTASSAFYPQVSVDQTATPMLDGTSLGICTGQSMDRGNSQTFGNSQNIGEQGYSSTNSSDSSSQQLVASSLTSSSTLTEILEAMKHPSTGVQLLSEQKGLSPYCFISAEVVHWLVNHVEGIQTQAMAIDIMQKMLEEQLITHASGEAWRTFIYGFYFYKIVTDKEPDRVAMQQPATTWHTAGVDDFASFQRKWFEVAFVAEELVHSEIPAFLLPWLPSRPASYASRHSSFSRSFGGRSQAAALLAATVPEQRTVTLDVDVNNRTDRLEWCSCYYHGNFSLNAAFEIKLHWMAVTAAVLFEMVQGWHRKATSCGFLLVPVLEGPFALPSYLYGDPLRAQLFIPLNISCLLKEGSEHLFDSFEPETYWDRMHLFQEAIAHRFGFVQDKYSASAFNFPAENKPQYIHVTGTVFLQLPYSKRKFSGQQRRRRNSTSSTNQNMFCEERVGYNWAYNTMLTKTWRSSATGDEKFADRLLKDFTDFCINRDNRLVTFWTSCLEKMHASAP.

Disordered stretches follow at residues 427-450 (GKKP…KESE), 484-527 (VRER…SSLG), and 696-720 (LSNS…VSTS). Residues 430–439 (PASEKAKNGR) are compositionally biased toward basic and acidic residues. Low complexity predominate over residues 494–508 (SASSCDVSSSPSLPS). Phosphoserine is present on serine 505. Polar residues-rich tracts occupy residues 518 to 527 (SQASDDSSLG) and 696 to 707 (LSNSGAGMNPRT). Serine 1002 is subject to Phosphoserine; by PIM1. Positions 1135–1153 (DRGNSQTFGNSQNIGEQGY) are enriched in polar residues. The disordered stretch occupies residues 1135-1165 (DRGNSQTFGNSQNIGEQGYSSTNSSDSSSQQ). The span at 1154 to 1165 (SSTNSSDSSSQQ) shows a compositional bias: low complexity. The DEP domain occupies 1187-1262 (PSTGVQLLSE…YGFYFYKIVT (76 aa)). Serine 1530 carries the phosphoserine; by PKB/AKT1 and PIM1 modification.

The protein belongs to the IML1 family. As to quaternary structure, within the GATOR complex, component of the GATOR1 subcomplex, made of DEPDC5, NPRL2 and NPRL3. GATOR1 mediates the strong interaction of the GATOR complex with small GTPases Rag (RagA/RRAGA, RagB/RRAGB, RagC/RRAGC and/or RagD/RRAGD) heterodimers. Interacts with SAMTOR; interaction is direct and takes place in presence of methionine, leading to inhibit the activity of the GATOR1 complex. In terms of processing, phosphorylation at Ser-1002 and Ser-1530 by AKT1 and PIM1 inhibit the activity of DEPDC5, releasing inhibition of the mTORC1 pathway. Post-translationally, ubiquitinated. Amino acid-induced 'Lys-48'-linked polyubiquitination of DEPDC5 by the BCR(KLHL22) ubiquitin ligase complex leads to DEPDC5 proteasomal degradation and inhibition of the GATOR1 complex. Ubiquitination may occur at multiple lysines. As to expression, expressed in developing and adult brain.

The protein localises to the lysosome membrane. The protein resides in the cytoplasm. Its subcellular location is the cytosol. It is found in the perinuclear region. Functionally, as a component of the GATOR1 complex functions as an inhibitor of the amino acid-sensing branch of the mTORC1 pathway. In response to amino acid depletion, the GATOR1 complex has GTPase activating protein (GAP) activity and strongly increases GTP hydrolysis by RagA/RRAGA (or RagB/RRAGB) within heterodimeric Rag complexes, thereby turning them into their inactive GDP-bound form, releasing mTORC1 from lysosomal surface and inhibiting mTORC1 signaling. In the presence of abundant amino acids, the GATOR1 complex is negatively regulated by GATOR2, the other GATOR subcomplex, in this amino acid-sensing branch of the TORC1 pathway. Within the GATOR1 complex, DEPDC5 mediates direct interaction with the nucleotide-binding pocket of small GTPases Rag (RagA/RRAGA, RagB/RRAGB, RagC/RRAGC and/or RagD/RRAGD) and coordinates their nucleotide loading states by promoting RagA/RRAGA or RagB/RRAGB into their GDP-binding state and RagC/RRAGC or RagD/RRAGD into their GTP-binding state. However, it does not execute the GAP activity, which is mediated by NPRL2. This is GATOR1 complex protein DEPDC5 from Homo sapiens (Human).